Consider the following 354-residue polypeptide: UPF0283 membrane protein CGSHiGG_02710 (354 aa).

3 helical membrane-spanning segments follow: residues 57–77 (LLKFTALLFGLATVAQSVQWI), 87–107 (IYLAFALVSLIIILLGIKEII), and 211–231 (ESAVIVAISPLAVVDMFFIAW).

It belongs to the UPF0283 family.

The protein localises to the cell inner membrane. This Haemophilus influenzae (strain PittGG) protein is UPF0283 membrane protein CGSHiGG_02710.